The chain runs to 125 residues: MKTSAYNVYLGVVAAMLALLFVTINAAPMEADDETAENTLVAHPDGDMELSGPWDAINTAALRKLLLQLDAEDRMGGVTRSWPQAEPRGWGLRALDSRLARQWRADKRQVRFRQCYFNPISCFRK.

The first 26 residues, 1-26 (MKTSAYNVYLGVVAAMLALLFVTINA), serve as a signal peptide directing secretion. Residues 27-106 (APMEADDETA…SRLARQWRAD (80 aa)) constitute a propeptide that is removed on maturation. Q109 is modified (pyrrolidone carboxylic acid).

It belongs to the allatostatin family.

The protein localises to the secreted. Strongly inhibits juvenile hormone biosynthesis in vitro by the corpora allata from fifth-stadium larvae and adult females. This Spodoptera frugiperda (Fall armyworm) protein is Allatostatin.